Consider the following 419-residue polypeptide: Aminoacyltransferase FemB (419 aa).

The protein belongs to the FemABX family. As to quaternary structure, homodimer. Interacts with FemA.

It localises to the cytoplasm. The enzyme catalyses MurNAc-L-Ala-D-isoglutaminyl-L-Lys-(N(6)-tri-Gly)-D-Ala-D-Ala-diphospho-di-trans,octa-cis-undecaprenyl-GlcNAc + 2 glycyl-tRNA(Gly) = MurNAc-L-Ala-D-isoglutaminyl-L-Lys-(N(6)-penta-Gly)-D-Ala-D-Ala-diphospho-di-trans,octa-cis-undecaprenyl-GlcNAc + 2 tRNA(Gly) + 2 H(+). Catalyzes the formation of the pentaglycine interpeptide bridge, which is characteristic of the S.aureus peptidoglycan. Adds glycines 4 and 5 of the pentaglycine bridge, using glycyl-tRNA(Gly) as donor. The polypeptide is Aminoacyltransferase FemB (femB) (Staphylococcus aureus (strain bovine RF122 / ET3-1)).